Here is a 245-residue protein sequence, read N- to C-terminus: MARERREIRRIESAAARQVTFSKRRRGLFKKAEELAVLCDADVALVVFSSTGKLSQFASSNMNEIIDKYTTHSKNLGKTDKQPSIDLNFFLIILLRTYTNSYAYIHLLLQLEHSKCSSLNEQLAEASLQLRQMRGEELEGLSVEELQQMEKNLEAGLQRVLCTKDQQFMQEISELQRKGIQLAEENMRLRDQMPQVPTAGLAVPDTENVLTEDGQSSESVMTALNSGSSQDNDDGSDISLKLGLP.

One can recognise an MADS-box domain in the interval 1-61; the sequence is MARERREIRR…GKLSQFASSN (61 aa). The region spanning 109–199 is the K-box domain; the sequence is LQLEHSKCSS…RDQMPQVPTA (91 aa). Residues 197–245 form a disordered region; that stretch reads PTAGLAVPDTENVLTEDGQSSESVMTALNSGSSQDNDDGSDISLKLGLP. Over residues 213 to 224 the composition is skewed to polar residues; sequence DGQSSESVMTAL.

As to expression, expressed in roots, shoots and developing panicles. Expressed in shoots.

The protein resides in the nucleus. Its function is as follows. Transcription factor that acts as a negative regulator of brassinosteroid signaling. This is MADS-box transcription factor 55 (MADS55) from Oryza sativa subsp. japonica (Rice).